The sequence spans 304 residues: Dihydroorotate dehydrogenase B (NAD(+)), catalytic subunit (304 aa).

FMN contacts are provided by residues S22 and 46 to 47 (KG). Substrate contacts are provided by residues K46 and 70-74 (NSIGL). FMN-binding residues include N100 and N128. N128 contributes to the substrate binding site. C131 acts as the Nucleophile in catalysis. FMN is bound by residues K166 and I192. 193-194 (NT) provides a ligand contact to substrate. FMN is bound by residues G218, 244-245 (GG), and 266-267 (GT).

This sequence belongs to the dihydroorotate dehydrogenase family. Type 1 subfamily. Heterotetramer of 2 PyrK and 2 PyrD type B subunits. However, the metal reductase complex seems to be composed of a heterooctamer of 4 PyrK and 4 PyrD subunits. FMN serves as cofactor.

The protein localises to the cytoplasm. The catalysed reaction is (S)-dihydroorotate + NAD(+) = orotate + NADH + H(+). Its pathway is pyrimidine metabolism; UMP biosynthesis via de novo pathway; orotate from (S)-dihydroorotate (NAD(+) route): step 1/1. Catalyzes the conversion of dihydroorotate to orotate with NAD(+) as electron acceptor. In terms of biological role, together with PyrK, also forms a metal reductase complex able to reduce Fe(III)-chelates to Fe(II)-chelates, as well as soluble Cr(VI) and U(VI), using NADH as electron donor. To a lesser extent, can also use NADPH as an electron donor. Is unable to reduce riboflavin and FMN with NADH as electron donor. May have an in vivo role in metal reduction in D.reducens, which is an organism capable of reducing contaminant heavy metals and radionuclides. This is Dihydroorotate dehydrogenase B (NAD(+)), catalytic subunit (pyrD) from Desulforamulus reducens (strain ATCC BAA-1160 / DSM 100696 / MI-1) (Desulfotomaculum reducens).